The following is a 421-amino-acid chain: G/T mismatch-specific thymine DNA glycosylase (421 aa).

The interval 45 to 108 is disordered; that stretch reads PNMATVTEQQ…STKSKEKQEK (64 aa). Basic and acidic residues predominate over residues 77–89; sequence RAAEPQEPVEPKK. A compositionally biased stretch (basic residues) spans 91-100; sequence ATSKKSGKST. Glycyl lysine isopeptide (Lys-Gly) (interchain with G-Cter in SUMO2) cross-links involve residues Lys-114 and Lys-259. Lys-341 participates in a covalent cross-link: Glycyl lysine isopeptide (Lys-Gly) (interchain with G-Cter in SUMO); alternate. A Glycyl lysine isopeptide (Lys-Gly) (interchain with G-Cter in SUMO2); alternate cross-link involves residue Lys-341.

The protein belongs to the uracil-DNA glycosylase (UDG) superfamily. TDG/mug family. Homodimer. Interacts with AICDA and GADD45A. Post-translationally, sumoylation on Lys-341 by either SUMO1 or SUMO2 induces dissociation of the product DNA.

It is found in the nucleus. It carries out the reaction Hydrolyzes mismatched double-stranded DNA and polynucleotides, releasing free thymine.. Its function is as follows. DNA glycosylase that plays a key role in active DNA demethylation: specifically recognizes and binds 5-formylcytosine (5fC) and 5-carboxylcytosine (5caC) in the context of CpG sites and mediates their excision through base-excision repair (BER) to install an unmethylated cytosine. Cannot remove 5-hydroxymethylcytosine (5hmC). According to an alternative model, involved in DNA demethylation by mediating DNA glycolase activity toward 5-hydroxymethyluracil (5hmU) produced by deamination of 5hmC. Also involved in DNA repair by acting as a thymine-DNA glycosylase that mediates correction of G/T mispairs to G/C pairs: in the DNA of higher eukaryotes, hydrolytic deamination of 5-methylcytosine to thymine leads to the formation of G/T mismatches. Its role in the repair of canonical base damage is however minor compared to its role in DNA demethylation. It is capable of hydrolyzing the carbon-nitrogen bond between the sugar-phosphate backbone of the DNA and a mispaired thymine. In addition to the G/T, it can remove thymine also from C/T and T/T mispairs in the order G/T &gt;&gt; C/T &gt; T/T. It has no detectable activity on apyrimidinic sites and does not catalyze the removal of thymine from A/T pairs or from single-stranded DNA. It can also remove uracil and 5-bromouracil from mispairs with guanine. The polypeptide is G/T mismatch-specific thymine DNA glycosylase (Tdg) (Mus musculus (Mouse)).